We begin with the raw amino-acid sequence, 393 residues long: Formate-dependent phosphoribosylglycinamide formyltransferase (393 aa).

Residues 22–23 and E82 each bind N(1)-(5-phospho-beta-D-ribosyl)glycinamide; that span reads EL. Residues R114, K155, 160–165, 195–198, and E203 contribute to the ATP site; these read SSGKGQ and EGFI. In terms of domain architecture, ATP-grasp spans 119–308; sequence RLAAEELKLP…QFALHARAIL (190 aa). E267 and E279 together coordinate Mg(2+). Residues D286, K356, and 363-364 contribute to the N(1)-(5-phospho-beta-D-ribosyl)glycinamide site; that span reads RR.

The protein belongs to the PurK/PurT family. As to quaternary structure, homodimer.

It catalyses the reaction N(1)-(5-phospho-beta-D-ribosyl)glycinamide + formate + ATP = N(2)-formyl-N(1)-(5-phospho-beta-D-ribosyl)glycinamide + ADP + phosphate + H(+). It functions in the pathway purine metabolism; IMP biosynthesis via de novo pathway; N(2)-formyl-N(1)-(5-phospho-D-ribosyl)glycinamide from N(1)-(5-phospho-D-ribosyl)glycinamide (formate route): step 1/1. In terms of biological role, involved in the de novo purine biosynthesis. Catalyzes the transfer of formate to 5-phospho-ribosyl-glycinamide (GAR), producing 5-phospho-ribosyl-N-formylglycinamide (FGAR). Formate is provided by PurU via hydrolysis of 10-formyl-tetrahydrofolate. This chain is Formate-dependent phosphoribosylglycinamide formyltransferase, found in Pseudomonas syringae pv. syringae (strain B728a).